A 494-amino-acid polypeptide reads, in one-letter code: GTPase Der (494 aa).

EngA-type G domains lie at 3-166 and 207-380; these read PVIA…MDAE and IKLA…DCST. Residues 9–16, 56–60, 118–121, 213–220, 260–264, and 325–328 contribute to the GTP site; these read GRPNVGKS, DTGGI, NKTD, DTAGV, and NKWD. The region spanning 381-465 is the KH-like domain; the sequence is KRVGTSLLTR…PIRIQFKEGE (85 aa).

The protein belongs to the TRAFAC class TrmE-Era-EngA-EngB-Septin-like GTPase superfamily. EngA (Der) GTPase family. Associates with the 50S ribosomal subunit.

GTPase that plays an essential role in the late steps of ribosome biogenesis. This chain is GTPase Der, found in Yersinia enterocolitica serotype O:8 / biotype 1B (strain NCTC 13174 / 8081).